Reading from the N-terminus, the 427-residue chain is Serine hydroxymethyltransferase (427 aa).

(6S)-5,6,7,8-tetrahydrofolate-binding positions include Leu118 and 122–124 (GHL). Lys227 carries the post-translational modification N6-(pyridoxal phosphate)lysine. (6S)-5,6,7,8-tetrahydrofolate is bound by residues Glu243 and 351–353 (SPF).

Belongs to the SHMT family. In terms of assembly, homodimer. Pyridoxal 5'-phosphate serves as cofactor.

The protein resides in the cytoplasm. It catalyses the reaction (6R)-5,10-methylene-5,6,7,8-tetrahydrofolate + glycine + H2O = (6S)-5,6,7,8-tetrahydrofolate + L-serine. The protein operates within one-carbon metabolism; tetrahydrofolate interconversion. Its pathway is amino-acid biosynthesis; glycine biosynthesis; glycine from L-serine: step 1/1. In terms of biological role, catalyzes the reversible interconversion of serine and glycine with tetrahydrofolate (THF) serving as the one-carbon carrier. This reaction serves as the major source of one-carbon groups required for the biosynthesis of purines, thymidylate, methionine, and other important biomolecules. Also exhibits THF-independent aldolase activity toward beta-hydroxyamino acids, producing glycine and aldehydes, via a retro-aldol mechanism. The protein is Serine hydroxymethyltransferase of Thermotoga maritima (strain ATCC 43589 / DSM 3109 / JCM 10099 / NBRC 100826 / MSB8).